We begin with the raw amino-acid sequence, 669 residues long: Leucine zipper putative tumor suppressor 2 (669 aa).

Over residues 1-25 the composition is skewed to low complexity; the sequence is MAIVQTLPVPLEPAPEAATAPQAPV. Disordered stretches follow at residues 1-56, 92-131, 150-201, and 215-323; these read MAIV…PTFF, NEDF…IPVS, PVLP…AADK, and GTLS…SDEA. Residues 1-332 are required for centrosomal localization; it reads MAIVQTLPVP…ALLHCVLEGK (332 aa). Over residues 172–181 the composition is skewed to polar residues; that stretch reads LSGSQGSLTQ. Over residues 187–199 the composition is skewed to low complexity; sequence ASSSSSSSSSSAA. A compositionally biased stretch (polar residues) spans 215 to 233; the sequence is GTLSDSGRNSLSSLPTYST. Composition is skewed to low complexity over residues 241–251 and 267–283; these read SSPGGHLPSHG and GPSH…KSTG. Ser249 bears the Phosphoserine mark. Positions 284-295 are enriched in gly residues; it reads SLGGRVAGGLLG. Ser296 carries the post-translational modification Phosphoserine. Residues 298-308 show a composition bias toward polar residues; it reads TRASPDSSSCG. The span at 311–320 shows a compositional bias: pro residues; the sequence is SPPPPPPPPS. The stretch at 328–649 forms a coiled coil; it reads VLEGKLRDRE…LELEARELAD (322 aa). Positions 447–669 are sufficient for interaction with CTNNB1; sequence SGEISLLKQQ…CLEEITATEI (223 aa). The sufficient for interaction with KATNB1 and for inhibition of katanin-mediated microtubule severing stretch occupies residues 450-669; it reads ISLLKQQLKE…CLEEITATEI (220 aa). At Ser570 the chain carries Phosphoserine. The short motif at 631 to 640 is the Nuclear export signal element; sequence LEQELQQLSL.

It belongs to the LZTS2 family. Interacts with KATNB1. Also interacts with CTNNB1, gamma-tubulin and KIF23. In terms of tissue distribution, highly expressed in prostate and testis, and at slightly lower levels in spleen, thymus, uterus, small intestine and colon.

It is found in the cytoplasm. The protein localises to the cytoskeleton. Its subcellular location is the microtubule organizing center. The protein resides in the centrosome. In terms of biological role, negative regulator of katanin-mediated microtubule severing and release from the centrosome. Required for central spindle formation and the completion of cytokinesis. May negatively regulate axonal outgrowth by preventing the formation of microtubule bundles that are necessary for transport within the elongating axon. Negative regulator of the Wnt signaling pathway. Represses beta-catenin-mediated transcriptional activation by promoting the nuclear exclusion of beta-catenin. The sequence is that of Leucine zipper putative tumor suppressor 2 from Homo sapiens (Human).